The sequence spans 1921 residues: Putative callose synthase 6 (1921 aa).

Positions 1-23 (MEASSSGTAELPRSLSRRAPSRA) are disordered. Over 1-492 (MEASSSGTAE…FWNLFRDFDR (492 aa)) the chain is Cytoplasmic. A helical membrane pass occupies residues 493–513 (MWIFLVMAFQAMVIVGWHGSG). Residues 514 to 526 (SLGDIFDKDVFKT) lie on the Extracellular side of the membrane. The helical transmembrane segment at 527 to 547 (VLTIFITSAYLTLLQAALDII) threads the bilayer. Residues 548–560 (LNFNAWKNFKFSQ) lie on the Cytoplasmic side of the membrane. Residues 561–581 (ILRYLLKFAVAFMWAVLLPIA) traverse the membrane as a helical segment. Topologically, residues 582–611 (YSKSVQRPTGVVKFFSTWTGDWKDQSFYTY) are extracellular. A helical membrane pass occupies residues 612 to 632 (AVSFYVLPNILAALLFLVPPF). At 633–674 (RRAMECSDMRPIKVIMWWAQPKLYVGRGMHEDMFSLFKYTTF) the chain is on the cytoplasmic side. A helical transmembrane segment spans residues 675–695 (WIMLLISKLAFNYYVEILPLI). Residues 696 to 721 (TPTKMIMNLHIGHYQWHEFFPHATNN) are Extracellular-facing. A helical transmembrane segment spans residues 722-742 (IGVVIAIWAPIVLVYLMDTQI). The Cytoplasmic portion of the chain corresponds to 743–1484 (WYAIFSTLFG…FDFYRMLSFY (742 aa)). The chain crosses the membrane as a helical span at residues 1485–1505 (FTTIGFYFSSMLTVLTVYAFL). The Extracellular segment spans residues 1506 to 1540 (YGRMYMVMSGLEKEILRLASPNQLEALEQALATQS). Residues 1541 to 1561 (IFQLGFLMVLPMVMEIGLEHG) form a helical membrane-spanning segment. Topologically, residues 1562–1564 (FRS) are cytoplasmic. A helical membrane pass occupies residues 1565–1585 (AIVDFFIMQLQLASVFFTFQL). Topologically, residues 1586-1628 (GTKSHYYGRTILHGGSKYRPTGRGFVVFHAKFAENYRLYSRSH) are extracellular. Residues 1629-1649 (FVKGLELLLLLVVYQIYGHSY) form a helical membrane-spanning segment. Over 1650 to 1655 (RSSNLY) the chain is Cytoplasmic. Residues 1656 to 1676 (LYITVSMWFMVGSWLFAPFIF) traverse the membrane as a helical segment. The Extracellular segment spans residues 1677–1730 (NPSGFEWQKTVDDWTDWKRWLGDRGGIGIPVEKSWESWWNVEQEHLKHTSIRGR). A helical membrane pass occupies residues 1731-1751 (ILEITLALRFFIYQYGIVYQL). Residues 1752-1759 (NISQRSKS) are Cytoplasmic-facing. The helical transmembrane segment at 1760-1780 (FLVYGLSWVVLLTSLLVLKMV) threads the bilayer. Residues 1781 to 1796 (SMGRRRFGTDFQLMFR) are Extracellular-facing. A helical transmembrane segment spans residues 1797 to 1817 (ILKALLFLGFLSVMTILFVVF). Over 1818 to 1823 (KLTLTD) the chain is Cytoplasmic. The chain crosses the membrane as a helical span at residues 1824–1844 (LSASVLAFLPTGWAILLIGQV). The Extracellular portion of the chain corresponds to 1845 to 1867 (LRSPIKALGVWDSVKELGRAYEN). The helical transmembrane segment at 1868–1888 (IMGLVIFAPIAVLSWFPIVSE) threads the bilayer. Over 1889–1921 (FQARLLFNQAFSRGLQISMILAGRKDKATSSHK) the chain is Cytoplasmic.

The protein belongs to the glycosyltransferase 48 family.

The protein resides in the cell membrane. It catalyses the reaction [(1-&gt;3)-beta-D-glucosyl](n) + UDP-alpha-D-glucose = [(1-&gt;3)-beta-D-glucosyl](n+1) + UDP + H(+). Functionally, probably involved in callose synthesis, but not required for callose formation after wounding or pathogen attack. During plant growth and development, callose is found as a transitory component of the cell plate in dividing cells, is a major component of pollen mother cell walls and pollen tubes, and is found as a structural component of plasmodesmatal canals. The chain is Putative callose synthase 6 (CALS6) from Arabidopsis thaliana (Mouse-ear cress).